Reading from the N-terminus, the 708-residue chain is Solute carrier family 15 member 1 (708 aa).

A helical membrane pass occupies residues 1–21 (MGMSKSYGCFGYPLSIFFIVV). At 22–53 (NEFCERFSYYGMRALLILYFRRFIGWDDNLST) the chain is on the extracellular side. An N-linked (GlcNAc...) asparagine glycan is attached at N50. The chain crosses the membrane as a helical span at residues 54–74 (AIYHTFVALCYLTPILGALIA). At 75–82 (DSWLGKFK) the chain is on the cytoplasmic side. The chain crosses the membrane as a helical span at residues 83–103 (TIVSLSIVYTIGQAVTAVSSI). Residues 104-118 (NDLTDYNKDGTPDNL) lie on the Extracellular side of the membrane. The N-linked (GlcNAc...) asparagine glycan is linked to N117. Residues 119–139 (SVHVALSMIGLALIALGTGGI) form a helical membrane-spanning segment. Topologically, residues 140–161 (KPCVSAFGGDQFEEGQEKQRNR) are cytoplasmic. A helical transmembrane segment spans residues 162–182 (FFSIFYLAINAGSLISTIVTP). Over 183–198 (MLRVHECGIYSQKACY) the chain is Extracellular. Residues 199–219 (PLAFGVPAALMAVSLIVFVIG) form a helical membrane-spanning segment. The Cytoplasmic portion of the chain corresponds to 220 to 276 (SGMYKKFQPQGNVMGKVVKCIGFALKNRFRHRSKQFPKREHWLDWAKEKYDERLISQ). Residues 277 to 297 (IKMVTKVMFLYIPLPMFWALF) form a helical membrane-spanning segment. Topologically, residues 298–327 (DQQGSRWTLQATAMSGKIGLLEVQPDQMQT) are extracellular. Residues 328–348 (VNAILIVVMVPIMDAVVYPLI) traverse the membrane as a helical segment. At 349 to 361 (AKCGFNFTSLKRM) the chain is on the cytoplasmic side. The chain crosses the membrane as a helical span at residues 362 to 382 (TVGMFLASMAFVMAAIVQLEI). At 383 to 584 (DKTLPVFPKQ…ISPNTVNMAL (202 aa)) the chain is on the extracellular side. An extracellular domain (ECD) region spans residues 383–585 (DKTLPVFPKQ…SPNTVNMALQ (203 aa)). N-linked (GlcNAc...) asparagine glycosylation is found at N408, N439, N495, N499, N509, N514, N527, and N539. A helical transmembrane segment spans residues 585–605 (QIPQYFLITCGEVVFSVTGLE). The Cytoplasmic segment spans residues 606–619 (FSYSQAPSNMKSVL). The chain crosses the membrane as a helical span at residues 620-640 (QAGWLLTVAVGNIIVLIVAGA). Over 641–645 (GQFSE) the chain is Extracellular. Residues 646–666 (QWAEYILFAALLLVVCVIFAI) form a helical membrane-spanning segment. At 667–708 (MARFYTYVNPAEIEAQFDDDEKKNLEKMNVYSTVTPVSQTQM) the chain is on the cytoplasmic side.

The protein belongs to the major facilitator superfamily. Proton-dependent oligopeptide transporter (POT/PTR) (TC 2.A.17) family. Interacts (via extracellular domain region) with trypsin.

The protein resides in the apical cell membrane. It carries out the reaction a dipeptide(out) + H(+)(out) = a dipeptide(in) + H(+)(in). The enzyme catalyses an L-amino acid tripeptide(out) + H(+)(out) = an L-amino acid tripeptide(in) + H(+)(in). The catalysed reaction is L-alanyl-L-lysine(out) + H(+)(out) = L-alanyl-L-lysine(in) + H(+)(in). It catalyses the reaction L-alanyl-L-proline(out) + H(+)(out) = L-alanyl-L-proline(in) + H(+)(in). It carries out the reaction L-alanyl-L-valine(out) + H(+)(out) = L-alanyl-L-valine(in) + H(+)(in). The enzyme catalyses carnosine(out) + H(+)(out) = carnosine(in) + H(+)(in). The catalysed reaction is glycyl-L-glutamine(out) + H(+)(out) = glycyl-L-glutamine(in) + H(+)(in). It catalyses the reaction glycyl-L-leucine(out) + H(+)(out) = glycyl-L-leucine(in) + H(+)(in). It carries out the reaction glycyl-L-proline(out) + H(+)(out) = glycyl-L-proline(in) + H(+)(in). The enzyme catalyses glycyl-sarcosine(out) + H(+)(out) = glycyl-sarcosine(in) + H(+)(in). The catalysed reaction is L-leucyl-L-leucine(out) + H(+)(out) = L-leucyl-L-leucine(in) + H(+)(in). It catalyses the reaction L-leucyl-L-proline(out) + H(+)(out) = L-leucyl-L-proline(in) + H(+)(in). It carries out the reaction L-phenylalanyl-L-leucine(out) + H(+)(out) = L-phenylalanyl-L-leucine(in) + H(+)(in). The enzyme catalyses L-phenylalanyl-L-phenylalanine(out) + H(+)(out) = L-phenylalanyl-L-phenylalanine(in) + H(+)(in). The catalysed reaction is L-lysyl-glycine(out) + H(+)(out) = L-lysyl-glycine(in) + H(+)(in). It catalyses the reaction L-tyrosylglycine(out) + H(+)(out) = L-tyrosylglycine(in) + H(+)(in). It carries out the reaction L-alanyl-L-aspartate(out) + 2 H(+)(out) = L-alanyl-L-aspartate(in) + 2 H(+)(in). The enzyme catalyses L-aspartyl-glycine(out) + 2 H(+)(out) = L-aspartyl-glycine(in) + 2 H(+)(in). The catalysed reaction is glycyl-L-aspartate(out) + 2 H(+)(out) = glycyl-L-aspartate(in) + 2 H(+)(in). It catalyses the reaction glycyl-L-glutamate(out) + 2 H(+)(out) = glycyl-L-glutamate(in) + 2 H(+)(in). It carries out the reaction L-alanyl-L-leucyl-L-alanine(out) + H(+)(out) = L-alanyl-L-leucyl-L-alanine(in) + H(+)(in). The enzyme catalyses L-alanyl-L-prolylglycine(out) + H(+)(out) = L-alanyl-L-prolylglycine(in) + H(+)(in). The catalysed reaction is glycylglycyl-L-isoleucine(out) + H(+)(out) = glycylglycyl-L-isoleucine(in) + H(+)(in). It catalyses the reaction glycylglycyl-L-proline(out) + H(+)(out) = glycylglycyl-L-proline(in) + H(+)(in). It carries out the reaction L-methionyl-L-phenylalanyl-L-methionine(out) + H(+)(out) = L-methionyl-L-phenylalanyl-L-methionine(in) + H(+)(in). The enzyme catalyses N-acetyl-D-muramoyl-L-alanyl-D-isoglutamine(out) + 2 H(+)(out) = N-acetyl-D-muramoyl-L-alanyl-D-isoglutamine(in) + 2 H(+)(in). The catalysed reaction is N(alpha)-formyl-L-methionyl-L-leucyl-L-phenylalanine(out) + 2 H(+)(out) = N(alpha)-formyl-L-methionyl-L-leucyl-L-phenylalanine(in) + 2 H(+)(in). Electrogenic proton-coupled amino-acid transporter that transports oligopeptides of 2 to 4 amino acids with a preference for dipeptides. Transports neutral and monovalently charged peptides with a proton to peptide stoichiometry of 1:1 or 2:1. Primarily responsible for the absorption of dietary di- and tripeptides from the small intestinal lumen. Mediates transepithelial transport of muramyl and N-formylated bacterial dipeptides contributing to recognition of pathogenic bacteria by the mucosal immune system. The chain is Solute carrier family 15 member 1 (SLC15A1) from Canis lupus familiaris (Dog).